The primary structure comprises 307 residues: Polysialic acid O-acetyltransferase (307 aa).

The span at 1–90 (MLRLKTQDSR…LKTQDSRLKT (90 aa)) shows a compositional bias: basic and acidic residues. The interval 1–95 (MLRLKTQDSR…SRLKTQDSFS (95 aa)) is disordered. Tandem repeats lie at residues 3 to 9 (RLKTQDS), 10 to 16 (RLKTQDS), 17 to 23 (RLKTQDS), 24 to 30 (RLKTQDS), 31 to 37 (RLKTQDS), 38 to 44 (RLKTQDS), 45 to 51 (RLKTQDS), 52 to 58 (RLKTQDS), 59 to 65 (RLKTQDS), 66 to 72 (RLKTQDS), 73 to 79 (RLKTQDS), 80 to 86 (RLKTQDS), and 87 to 93 (RLKTQDS). A 13 X 7 AA tandem repeat of RLKTQDS encoded by a 7 nucleotide repeat region spans residues 3 to 93 (RLKTQDSRLK…QDSRLKTQDS (91 aa)). Acetyl-CoA-binding positions include 208–210 (DGH), Arg237, Lys243, Lys261, and Lys278.

This sequence belongs to the transferase hexapeptide repeat family. Homotrimer. Hexamer formed by two homotrimers.

The enzyme catalyses [N-acetyl-alpha-D-neuraminosyl-(2-&gt;8)](n) + n acetyl-CoA = [N,O(9)-diacetyl-alpha-D-neuraminosyl-(2-&gt;8)](n) + n CoA. It carries out the reaction [N-acetyl-alpha-D-neuraminosyl-(2-&gt;8)](n) + n acetyl-CoA = [O(7),N-diacetyl-alpha-D-neuraminosyl-(2-&gt;8)](n) + n CoA. In terms of biological role, catalyzes the O-acetylation of capsular polymeric sialic acid. Shows high substrate specificity toward polymers of sialic acid that contains a large number of residues. The protein is Polysialic acid O-acetyltransferase of Escherichia coli O1:K1 / APEC.